Here is a 281-residue protein sequence, read N- to C-terminus: NADPH-dependent 7-cyano-7-deazaguanine reductase (281 aa).

A substrate-binding site is contributed by 81-83 (VES). Residue 83-84 (SK) participates in NADPH binding. Cys-188 functions as the Thioimide intermediate in the catalytic mechanism. The active-site Proton donor is the Asp-195. Residue 227–228 (HE) coordinates substrate. 256-257 (RG) provides a ligand contact to NADPH.

Belongs to the GTP cyclohydrolase I family. QueF type 2 subfamily. Homodimer.

Its subcellular location is the cytoplasm. It carries out the reaction 7-aminomethyl-7-carbaguanine + 2 NADP(+) = 7-cyano-7-deazaguanine + 2 NADPH + 3 H(+). The protein operates within tRNA modification; tRNA-queuosine biosynthesis. Its function is as follows. Catalyzes the NADPH-dependent reduction of 7-cyano-7-deazaguanine (preQ0) to 7-aminomethyl-7-deazaguanine (preQ1). The protein is NADPH-dependent 7-cyano-7-deazaguanine reductase of Acidovorax ebreus (strain TPSY) (Diaphorobacter sp. (strain TPSY)).